Reading from the N-terminus, the 133-residue chain is Profilin-1 (133 aa).

Cys95 and Cys117 form a disulfide bridge.

It belongs to the profilin family. As to quaternary structure, dimer and tetramer. Occurs in many kinds of cells as a complex with monomeric actin in a 1:1 ratio.

It is found in the cytoplasm. The protein resides in the cytoskeleton. Binds to actin and affects the structure of the cytoskeleton. At high concentrations, profilin prevents the polymerization of actin, whereas it enhances it at low concentrations. By binding to PIP2, it inhibits the formation of IP3 and DG. Possesses high binding affinity for poly(L-proline). The protein is Profilin-1 of Artemisia vulgaris (Mugwort).